The primary structure comprises 230 residues: Urease accessory protein UreF (230 aa).

This sequence belongs to the UreF family. UreD, UreF and UreG form a complex that acts as a GTP-hydrolysis-dependent molecular chaperone, activating the urease apoprotein by helping to assemble the nickel containing metallocenter of UreC. The UreE protein probably delivers the nickel.

The protein localises to the cytoplasm. Its function is as follows. Required for maturation of urease via the functional incorporation of the urease nickel metallocenter. This Cupriavidus pinatubonensis (strain JMP 134 / LMG 1197) (Cupriavidus necator (strain JMP 134)) protein is Urease accessory protein UreF.